The sequence spans 248 residues: Probable transcriptional regulatory protein Noc_0137 (248 aa).

The protein belongs to the TACO1 family.

The protein localises to the cytoplasm. This chain is Probable transcriptional regulatory protein Noc_0137, found in Nitrosococcus oceani (strain ATCC 19707 / BCRC 17464 / JCM 30415 / NCIMB 11848 / C-107).